We begin with the raw amino-acid sequence, 252 residues long: Beta-crystallin B1 (252 aa).

2 stretches are compositionally biased toward low complexity: residues Met-1–Val-15 and Lys-24–Thr-37. The tract at residues Met-1–Thr-42 is disordered. Ser-2 is subject to N-acetylserine. An N-terminal arm region spans residues Ser-2–Asn-58. 2 consecutive Beta/gamma crystallin 'Greek key' domains span residues Tyr-59 to Ala-98 and Gly-99 to Lys-143. A connecting peptide region spans residues Met-144 to Glu-148. 2 consecutive Beta/gamma crystallin 'Greek key' domains span residues His-149–Ser-190 and Gly-191–Arg-233. Residues Lys-235–Lys-252 are C-terminal arm.

It belongs to the beta/gamma-crystallin family. Homo/heterodimer, or complexes of higher-order. The structure of beta-crystallin oligomers seems to be stabilized through interactions between the N-terminal arms. Specific cleavages in the N-terminal arm occur during lens maturation and give rise to truncated forms, leading to impaired oligomerization and protein insolubilization.

Its function is as follows. Crystallins are the dominant structural components of the vertebrate eye lens. This is Beta-crystallin B1 (CRYBB1) from Homo sapiens (Human).